We begin with the raw amino-acid sequence, 189 residues long: Adenylate kinase (189 aa).

ATP is bound at residue 10 to 15 (AAGKGT). Positions 30-59 (STGDMLRAARASGSELGQRVAKIMDEGGLV) are NMP. Residues Thr31, Arg36, 57-59 (GLV), 85-88 (GFPR), and Gln92 each bind AMP. An LID region spans residues 126–136 (KRFEEQGRADD). Arg127 contributes to the ATP binding site. Arg133 and Arg144 together coordinate AMP. Gly172 contributes to the ATP binding site.

The protein belongs to the adenylate kinase family. Monomer.

The protein localises to the cytoplasm. It catalyses the reaction AMP + ATP = 2 ADP. It participates in purine metabolism; AMP biosynthesis via salvage pathway; AMP from ADP: step 1/1. Functionally, catalyzes the reversible transfer of the terminal phosphate group between ATP and AMP. Plays an important role in cellular energy homeostasis and in adenine nucleotide metabolism. This chain is Adenylate kinase, found in Hyphomonas neptunium (strain ATCC 15444).